A 276-amino-acid polypeptide reads, in one-letter code: Sulfur carrier protein FdhD (276 aa).

C122 acts as the Cysteine persulfide intermediate in catalysis. 259–264 is a binding site for Mo-bis(molybdopterin guanine dinucleotide); that stretch reads FCRRGR.

This sequence belongs to the FdhD family.

It localises to the cytoplasm. In terms of biological role, required for formate dehydrogenase (FDH) activity. Acts as a sulfur carrier protein that transfers sulfur from IscS to the molybdenum cofactor prior to its insertion into FDH. In Proteus mirabilis (strain HI4320), this protein is Sulfur carrier protein FdhD.